The sequence spans 477 residues: RTX-I toxin determinant D (477 aa).

The Cytoplasmic portion of the chain corresponds to 1–59 (MKTWLMGLYEFFQAYKTVWTEIWKIRHQLDTPDREKDENEFLPAHLELIETPVSKKPRL). Residues 60–80 (IAYLIMLFLFLALVISIVSHV) form a helical membrane-spanning segment. Residues 81–477 (EIVATATGKL…ESVSESLRER (397 aa)) lie on the Periplasmic side of the membrane.

It belongs to the membrane fusion protein (MFP) (TC 8.A.1) family.

Its subcellular location is the cell inner membrane. Functionally, involved in the transport of the toxin RTX-I as well as that of RTX-II. The protein is RTX-I toxin determinant D (apxID) of Actinobacillus pleuropneumoniae (Haemophilus pleuropneumoniae).